Reading from the N-terminus, the 45-residue chain is Cytochrome b559 subunit beta (45 aa).

Residues 20-36 (WIAVHTLAVPTVFFLGA) traverse the membrane as a helical segment. His24 serves as a coordination point for heme.

It belongs to the PsbE/PsbF family. In terms of assembly, heterodimer of an alpha subunit and a beta subunit. PSII is composed of 1 copy each of membrane proteins PsbA, PsbB, PsbC, PsbD, PsbE, PsbF, PsbH, PsbI, PsbJ, PsbK, PsbL, PsbM, PsbT, PsbX, PsbY, PsbZ, Psb30/Ycf12, peripheral proteins PsbO, CyanoQ (PsbQ), PsbU, PsbV and a large number of cofactors. It forms dimeric complexes. The cofactor is heme b.

It is found in the cellular thylakoid membrane. This b-type cytochrome is tightly associated with the reaction center of photosystem II (PSII). PSII is a light-driven water:plastoquinone oxidoreductase that uses light energy to abstract electrons from H(2)O, generating O(2) and a proton gradient subsequently used for ATP formation. It consists of a core antenna complex that captures photons, and an electron transfer chain that converts photonic excitation into a charge separation. The chain is Cytochrome b559 subunit beta from Nostoc sp. (strain PCC 7120 / SAG 25.82 / UTEX 2576).